Consider the following 298-residue polypeptide: Apolipoprotein E (298 aa).

The N-terminal stretch at 1-18 (MKVLWAALVVTLLAGCRA) is a signal peptide. Repeat copies occupy residues 74–94 (LLIEDTMKEVKDYKAELEKEL), 95–116 (GPVAEDTKARLAKELQAAQARL), 117–138 (GADMEEVRNRLSQYRSEVQAML), 139–160 (GQSSEELRARLTSHLRKMRKRL), 161–182 (QRDIDELQKRMAVYKAGAQEGA), 183–203 (ERGVSAIRERLGSLIEQGRLQ), 204–221 (ALTSQPLQERAQAWGEQM), and 222–243 (RGRLEKVGSQARDRLEEVREQM). Residues 95 to 243 (GPVAEDTKAR…DRLEEVREQM (149 aa)) form an 8 X 22 AA approximate tandem repeats region. Met-137 carries the methionine sulfoxide modification. Phosphoserine is present on Ser-141. The tract at residues 151–161 (SHLRKMRKRLQ) is LDL and other lipoprotein receptors binding. 155–158 (KMRK) serves as a coordination point for heparin. Residues 203-271 (QALTSQPLQE…KSWFEPMMED (69 aa)) are lipid-binding and lipoprotein association. 217–224 (WGEQMRGR) is a binding site for heparin. The interval 259-271 (ARLKSWFEPMMED) is specificity for association with VLDL.

It belongs to the apolipoprotein A1/A4/E family. As to quaternary structure, homotetramer. May interact with ABCA1; functionally associated with ABCA1 in the biogenesis of HDLs. May interact with APP/A4 amyloid-beta peptide; the interaction is extremely stable in vitro but its physiological significance is unclear. May interact with MAPT. May interact with MAP2. In the cerebrospinal fluid, interacts with secreted SORL1. Interacts with PMEL; this allows the loading of PMEL luminal fragment on ILVs to induce fibril nucleation. APOE exists as multiple glycosylated and sialylated glycoforms within cells and in plasma. The extent of glycosylation and sialylation are tissue and context specific. In terms of processing, glycated in plasma VLDL. Post-translationally, phosphorylated by FAM20C in the extracellular medium.

It is found in the secreted. The protein localises to the extracellular space. Its subcellular location is the extracellular matrix. The protein resides in the extracellular vesicle. It localises to the endosome. It is found in the multivesicular body. Its function is as follows. APOE is an apolipoprotein, a protein associating with lipid particles, that mainly functions in lipoprotein-mediated lipid transport between organs via the plasma and interstitial fluids. APOE is a core component of plasma lipoproteins and is involved in their production, conversion and clearance. Apolipoproteins are amphipathic molecules that interact both with lipids of the lipoprotein particle core and the aqueous environment of the plasma. As such, APOE associates with chylomicrons, chylomicron remnants, very low density lipoproteins (VLDL) and intermediate density lipoproteins (IDL) but shows a preferential binding to high-density lipoproteins (HDL). It also binds a wide range of cellular receptors including the LDL receptor/LDLR, the LDL receptor-related proteins LRP1, LRP2 and LRP8 and the very low-density lipoprotein receptor/VLDLR that mediate the cellular uptake of the APOE-containing lipoprotein particles. Finally, APOE also has a heparin-binding activity and binds heparan-sulfate proteoglycans on the surface of cells, a property that supports the capture and the receptor-mediated uptake of APOE-containing lipoproteins by cells. A main function of APOE is to mediate lipoprotein clearance through the uptake of chylomicrons, VLDLs, and HDLs by hepatocytes. APOE is also involved in the biosynthesis by the liver of VLDLs as well as their uptake by peripheral tissues ensuring the delivery of triglycerides and energy storage in muscle, heart and adipose tissues. By participating in the lipoprotein-mediated distribution of lipids among tissues, APOE plays a critical role in plasma and tissues lipid homeostasis. APOE is also involved in two steps of reverse cholesterol transport, the HDLs-mediated transport of cholesterol from peripheral tissues to the liver, and thereby plays an important role in cholesterol homeostasis. First, it is functionally associated with ABCA1 in the biogenesis of HDLs in tissues. Second, it is enriched in circulating HDLs and mediates their uptake by hepatocytes. APOE also plays an important role in lipid transport in the central nervous system, regulating neuron survival and sprouting. This Cavia tschudii (Montane guinea pig) protein is Apolipoprotein E (APOE).